The sequence spans 181 residues: ATP synthase subunit b, chloroplastic (181 aa).

Residues 27–49 (LATNPINLSVVLGVVIYFGKGVL) traverse the membrane as a helical segment.

This sequence belongs to the ATPase B chain family. As to quaternary structure, F-type ATPases have 2 components, F(1) - the catalytic core - and F(0) - the membrane proton channel. F(1) has five subunits: alpha(3), beta(3), gamma(1), delta(1), epsilon(1). F(0) has four main subunits: a(1), b(1), b'(1) and c(10-14). The alpha and beta chains form an alternating ring which encloses part of the gamma chain. F(1) is attached to F(0) by a central stalk formed by the gamma and epsilon chains, while a peripheral stalk is formed by the delta, b and b' chains.

Its subcellular location is the plastid. It localises to the chloroplast thylakoid membrane. Its function is as follows. F(1)F(0) ATP synthase produces ATP from ADP in the presence of a proton or sodium gradient. F-type ATPases consist of two structural domains, F(1) containing the extramembraneous catalytic core and F(0) containing the membrane proton channel, linked together by a central stalk and a peripheral stalk. During catalysis, ATP synthesis in the catalytic domain of F(1) is coupled via a rotary mechanism of the central stalk subunits to proton translocation. Component of the F(0) channel, it forms part of the peripheral stalk, linking F(1) to F(0). This Lemna minor (Common duckweed) protein is ATP synthase subunit b, chloroplastic.